Reading from the N-terminus, the 571-residue chain is Proline--tRNA ligase (571 aa).

Belongs to the class-II aminoacyl-tRNA synthetase family. ProS type 1 subfamily. As to quaternary structure, homodimer.

Its subcellular location is the cytoplasm. The catalysed reaction is tRNA(Pro) + L-proline + ATP = L-prolyl-tRNA(Pro) + AMP + diphosphate. Catalyzes the attachment of proline to tRNA(Pro) in a two-step reaction: proline is first activated by ATP to form Pro-AMP and then transferred to the acceptor end of tRNA(Pro). As ProRS can inadvertently accommodate and process non-cognate amino acids such as alanine and cysteine, to avoid such errors it has two additional distinct editing activities against alanine. One activity is designated as 'pretransfer' editing and involves the tRNA(Pro)-independent hydrolysis of activated Ala-AMP. The other activity is designated 'posttransfer' editing and involves deacylation of mischarged Ala-tRNA(Pro). The misacylated Cys-tRNA(Pro) is not edited by ProRS. The protein is Proline--tRNA ligase of Vibrio parahaemolyticus serotype O3:K6 (strain RIMD 2210633).